The chain runs to 94 residues: Large ribosomal subunit protein bL25 (94 aa).

It belongs to the bacterial ribosomal protein bL25 family. In terms of assembly, part of the 50S ribosomal subunit; part of the 5S rRNA/L5/L18/L25 subcomplex. Contacts the 5S rRNA. Binds to the 5S rRNA independently of L5 and L18.

Its function is as follows. This is one of the proteins that binds to the 5S RNA in the ribosome where it forms part of the central protuberance. This is Large ribosomal subunit protein bL25 from Sodalis glossinidius (strain morsitans).